A 456-amino-acid chain; its full sequence is Glycosyl hydrolase family 109 protein 2 (456 aa).

Residues 1-33 (MSGFDRRSFLKASMVTAAATALAACASSERATG) constitute a signal peptide (tat-type signal). NAD(+) is bound by residues 63 to 64 (ER), Asp-85, 134 to 137 (WAWH), 154 to 155 (EV), and Asn-183. Residues Tyr-212, Arg-231, 243–246 (YPTH), and Tyr-325 each bind substrate. Tyr-243 lines the NAD(+) pocket.

The protein belongs to the Gfo/Idh/MocA family. Glycosyl hydrolase 109 subfamily. Requires NAD(+) as cofactor. In terms of processing, predicted to be exported by the Tat system. The position of the signal peptide cleavage has not been experimentally proven.

Functionally, glycosidase. The sequence is that of Glycosyl hydrolase family 109 protein 2 from Shewanella sp. (strain ANA-3).